A 247-amino-acid polypeptide reads, in one-letter code: 4-hydroxy-tetrahydrodipicolinate reductase (247 aa).

Residues 12-17 (GITGRM), 78-80 (GTT), and 102-105 (AANF) contribute to the NAD(+) site. The active-site Proton donor/acceptor is the His-136. His-137 serves as a coordination point for (S)-2,3,4,5-tetrahydrodipicolinate. Catalysis depends on Lys-140, which acts as the Proton donor. Position 146–147 (146–147 (GT)) interacts with (S)-2,3,4,5-tetrahydrodipicolinate.

The protein belongs to the DapB family.

It is found in the cytoplasm. The enzyme catalyses (S)-2,3,4,5-tetrahydrodipicolinate + NAD(+) + H2O = (2S,4S)-4-hydroxy-2,3,4,5-tetrahydrodipicolinate + NADH + H(+). It catalyses the reaction (S)-2,3,4,5-tetrahydrodipicolinate + NADP(+) + H2O = (2S,4S)-4-hydroxy-2,3,4,5-tetrahydrodipicolinate + NADPH + H(+). It functions in the pathway amino-acid biosynthesis; L-lysine biosynthesis via DAP pathway; (S)-tetrahydrodipicolinate from L-aspartate: step 4/4. Functionally, catalyzes the conversion of 4-hydroxy-tetrahydrodipicolinate (HTPA) to tetrahydrodipicolinate. The chain is 4-hydroxy-tetrahydrodipicolinate reductase from Acidiphilium cryptum (strain JF-5).